A 305-amino-acid chain; its full sequence is Coenzyme PQQ synthesis protein B (305 aa).

It belongs to the PqqB family.

It functions in the pathway cofactor biosynthesis; pyrroloquinoline quinone biosynthesis. Functionally, may be involved in the transport of PQQ or its precursor to the periplasm. The chain is Coenzyme PQQ synthesis protein B from Methylobacillus flagellatus.